The primary structure comprises 1277 residues: NPC intracellular cholesterol transporter 1 (1277 aa).

A signal peptide spans 1–22 (MGAHHPALGLLLLLLCPAQVFS). Residues 23–269 (QSCVWYGECG…WRIWGLDAMY (247 aa)) are Lumenal-facing. 9 disulfide bridges follow: cysteine 25–cysteine 74, cysteine 31–cysteine 42, cysteine 63–cysteine 109, cysteine 75–cysteine 113, cysteine 97–cysteine 238, cysteine 100–cysteine 160, cysteine 177–cysteine 184, cysteine 227–cysteine 243, and cysteine 240–cysteine 247. Asparagine 41 contacts cholesterol. An N-linked (GlcNAc...) asparagine glycan is attached at asparagine 70. Glutamine 79 contacts cholesterol. N-linked (GlcNAc...) asparagine glycosylation is found at asparagine 122 and asparagine 137. The important for cholesterol binding and cholesterol transfer from NPC1 to liposomes stretch occupies residues 175–205 (LLCGRDARACNATNWIEYMFNKDNGQAPFTI). N-linked (GlcNAc...) asparagine glycosylation is found at asparagine 185, asparagine 222, and asparagine 228. The chain crosses the membrane as a helical span at residues 270 to 290 (VIMWVTYVAFLFVFFGALLAV). Residues 291-350 (WCHRRRYFVSEYTPIDSNIAFSVNSSDKGEASCCDPLGAAFDDCLRRMFTKWGAFCVRNP) are Cytoplasmic-facing. Residues 351–371 (TCIIFFSLAFITVCSSGLVFV) traverse the membrane as a helical segment. Residues 372–621 (QVTTNPVELW…ELNRESNSDV (250 aa)) lie on the Lumenal side of the membrane. Asparagine 414, asparagine 459, asparagine 478, and asparagine 524 each carry an N-linked (GlcNAc...) asparagine glycan. 2 disulfides stabilise this stretch: cysteine 468–cysteine 479 and cysteine 516–cysteine 533. An SSD domain is found at 620–785 (DVFTVIISYV…ITCFVSLLGL (166 aa)). Residues 622-642 (FTVIISYVVMFLYISLALGHI) traverse the membrane as a helical segment. The Cytoplasmic portion of the chain corresponds to 643–653 (QSCSRLLVDSK). The chain crosses the membrane as a helical span at residues 654 to 674 (ISLGIAGILIVLSSVACSLGI). The Lumenal segment spans residues 675–683 (FSYMGMPLT). The helical transmembrane segment at 684–704 (LIVIEVIPFLVLAVGVDNIFI) threads the bilayer. At 705 to 730 (LVQTYQRDERLQEETLDQQLGRILGE) the chain is on the cytoplasmic side. Residues 731 to 751 (VAPTMFLSSFSETSAFFFGAL) form a helical membrane-spanning segment. Residues 752–759 (SSMPAVHT) are Lumenal-facing. The chain crosses the membrane as a helical span at residues 760-780 (FSLFAGMAVLIDFLLQITCFV). At 781–832 (SLLGLDIKRQEKNHLDILCCVRGADDGQGSHASESYLFRFFKNYFAPLLLKD) the chain is on the cytoplasmic side. A helical transmembrane segment spans residues 833-853 (WLRPIVVAVFVGVLSFSVAVV). Residues 854 to 1097 (NKVDIGLDQS…EQYLTIIDDT (244 aa)) lie on the Lumenal side of the membrane. Residues asparagine 868 and asparagine 898 are each glycosylated (N-linked (GlcNAc...) asparagine). An intrachain disulfide couples cysteine 909 to cysteine 914. Residues asparagine 916, asparagine 961, asparagine 968, and asparagine 1063 are each glycosylated (N-linked (GlcNAc...) asparagine). 3 disulfide bridges follow: cysteine 956-cysteine 1011, cysteine 957-cysteine 979, and cysteine 967-cysteine 976. A helical transmembrane segment spans residues 1098 to 1118 (IFNLSVSLGSIFLVTLVVLGC). Topologically, residues 1119–1123 (ELWSA) are cytoplasmic. The helical transmembrane segment at 1124–1144 (VIMCITIAMILVNMFGVMWLW) threads the bilayer. A topological domain (lumenal) is located at residue glycine 1145. The helical transmembrane segment at 1146-1166 (ISLNAVSLVNLVMSCGISVEF) threads the bilayer. The Cytoplasmic portion of the chain corresponds to 1167–1194 (CSHITRAFTMSTKGSRVSRAEEALAHMG). Residues 1195–1215 (SSVFSGITLTKFGGIVVLAFA) traverse the membrane as a helical segment. Over 1216–1226 (KSQIFEIFYFR) the chain is Lumenal. The helical transmembrane segment at 1227–1247 (MYLAMVLLGATHGLIFLPVLL) threads the bilayer. The Cytoplasmic portion of the chain corresponds to 1248-1277 (SYIGPSVNKAKRHTTYERYRGTERERLLNF). Positions 1274–1277 (LLNF) are required for location in lysosomes. Residues 1274-1277 (LLNF) carry the Di-leucine motif motif.

It belongs to the patched family. As to quaternary structure, interacts (via the second lumenal domain) with NPC2. Interacts with TMEM97; the interaction may decrease NPC1 availability to the cell. Interacts with TIM1. Interacts with SLC38A9; this interaction inhibits cholesterol-mediated mTORC1 activation via its sterol transport activity. In terms of processing, N-glycosylated. As to expression, detected in liver (at protein level). Ubiquitous. Detected in adult heart, spleen, lung, liver, skeletal muscle, kidney, testis.

The protein localises to the late endosome membrane. It is found in the lysosome membrane. The catalysed reaction is cholesterol(in) = cholesterol(out). Functionally, intracellular cholesterol transporter which acts in concert with NPC2 and plays an important role in the egress of cholesterol from the endosomal/lysosomal compartment. Unesterified cholesterol that has been released from LDLs in the lumen of the late endosomes/lysosomes is transferred by NPC2 to the cholesterol-binding pocket in the N-terminal domain of NPC1. Cholesterol binds to NPC1 with the hydroxyl group buried in the binding pocket. May play a role in vesicular trafficking in glia, a process that may be crucial for maintaining the structural and functional integrity of nerve terminals. Inhibits cholesterol-mediated mTORC1 activation throught its interaction with SLC38A9. The polypeptide is NPC intracellular cholesterol transporter 1 (Mus musculus (Mouse)).